Here is a 200-residue protein sequence, read N- to C-terminus: Dephospho-CoA kinase (200 aa).

Positions 4-200 (VIGLTGGIAS…AILKKWNIID (197 aa)) constitute a DPCK domain. 12-17 (ASGKST) contributes to the ATP binding site.

Belongs to the CoaE family.

Its subcellular location is the cytoplasm. The enzyme catalyses 3'-dephospho-CoA + ATP = ADP + CoA + H(+). The protein operates within cofactor biosynthesis; coenzyme A biosynthesis; CoA from (R)-pantothenate: step 5/5. In terms of biological role, catalyzes the phosphorylation of the 3'-hydroxyl group of dephosphocoenzyme A to form coenzyme A. In Bacillus cereus (strain ZK / E33L), this protein is Dephospho-CoA kinase.